We begin with the raw amino-acid sequence, 602 residues long: Elongation factor 4 (602 aa).

One can recognise a tr-type G domain in the interval 7 to 189 (KYIRNFCIIA…KIVDMIPCPE (183 aa)). Residues 19–24 (DHGKST) and 136–139 (NKID) contribute to the GTP site.

This sequence belongs to the TRAFAC class translation factor GTPase superfamily. Classic translation factor GTPase family. LepA subfamily.

It localises to the cell membrane. It carries out the reaction GTP + H2O = GDP + phosphate + H(+). Functionally, required for accurate and efficient protein synthesis under certain stress conditions. May act as a fidelity factor of the translation reaction, by catalyzing a one-codon backward translocation of tRNAs on improperly translocated ribosomes. Back-translocation proceeds from a post-translocation (POST) complex to a pre-translocation (PRE) complex, thus giving elongation factor G a second chance to translocate the tRNAs correctly. Binds to ribosomes in a GTP-dependent manner. In Ruminiclostridium cellulolyticum (strain ATCC 35319 / DSM 5812 / JCM 6584 / H10) (Clostridium cellulolyticum), this protein is Elongation factor 4.